Consider the following 395-residue polypeptide: Elongation factor Tu (395 aa).

Positions 10–204 constitute a tr-type G domain; that stretch reads KSHVNIGTIG…AVDEYIPTPE (195 aa). Positions 19–26 are G1; that stretch reads GHVDHGKT. 19–26 lines the GTP pocket; that stretch reads GHVDHGKT. Thr26 contacts Mg(2+). A G2 region spans residues 60–64; sequence GITIN. Positions 81–84 are G3; that stretch reads DCPG. Residues 81 to 85 and 136 to 139 contribute to the GTP site; these read DCPGH and NKMD. The tract at residues 136–139 is G4; that stretch reads NKMD. The interval 174–176 is G5; that stretch reads SAL.

The protein belongs to the TRAFAC class translation factor GTPase superfamily. Classic translation factor GTPase family. EF-Tu/EF-1A subfamily. In terms of assembly, monomer.

The protein localises to the cytoplasm. It catalyses the reaction GTP + H2O = GDP + phosphate + H(+). GTP hydrolase that promotes the GTP-dependent binding of aminoacyl-tRNA to the A-site of ribosomes during protein biosynthesis. The protein is Elongation factor Tu of Enterococcus faecalis (strain ATCC 700802 / V583).